The following is a 592-amino-acid chain: uncharacterized protein (592 aa).

The first 23 residues, 1 to 23 (MRKAPLLRFTLASLALACSQAFA), serve as a signal peptide directing secretion. Catalysis depends on serine 37, which acts as the Nucleophile. Residues aspartate 294 and histidine 297 contribute to the active site. Residues 334–592 (HQDELRNQWQ…PDPGEPGGKP (259 aa)) enclose the Autotransporter domain. A disordered region spans residues 572–592 (FTLTGYTPHTAPDPGEPGGKP).

The protein belongs to the 'GDSL' lipolytic enzyme family.

This is an uncharacterized protein from Pseudomonas putida (Arthrobacter siderocapsulatus).